The sequence spans 341 residues: Cysteine-rich repeat secretory protein 1 (341 aa).

Residues 1–25 form the signal peptide; that stretch reads MFSLPLHQSKLIFLLSFLLIKTLNA. 2 consecutive Gnk2-homologous domains span residues 28 to 131 and 136 to 245; these read TYLL…SRKI and DQGP…ATFL. 4 cysteine pairs are disulfide-bonded: Cys-85/Cys-94, Cys-97/Cys-122, Cys-199/Cys-208, and Cys-211/Cys-236. The segment covering 247 to 262 has biased composition (pro residues); it reads PPPPPPPPPPPPPPPQ. Positions 247–274 are disordered; it reads PPPPPPPPPPPPPPPQRLYGENDTPSSD.

It belongs to the cysteine-rich repeat secretory protein family.

It is found in the secreted. This is Cysteine-rich repeat secretory protein 1 (CRRSP1) from Arabidopsis thaliana (Mouse-ear cress).